A 191-amino-acid polypeptide reads, in one-letter code: Prostaglandin-H2 D-isomerase (191 aa).

A signal peptide spans 1–24; the sequence is MATPNRPWMGLLLLGVLGVLQTPA. A glycan (N-linked (GlcNAc...) asparagine) is linked at Asn51. Cys65 acts as the Nucleophile in catalysis. An N-linked (GlcNAc...) asparagine glycan is attached at Asn78. A disulfide bond links Cys89 and Cys186.

The protein belongs to the calycin superfamily. Lipocalin family. Monomer. As to expression, in the male reproductive system, it is expressed in the testis and epididymis, and is secreted into the seminal fluid.

The protein localises to the rough endoplasmic reticulum. It is found in the nucleus membrane. It localises to the golgi apparatus. Its subcellular location is the cytoplasm. The protein resides in the perinuclear region. The protein localises to the secreted. It catalyses the reaction prostaglandin H2 = prostaglandin D2. In terms of biological role, catalyzes the conversion of PGH2 to PGD2, a prostaglandin involved in smooth muscle contraction/relaxation and a potent inhibitor of platelet aggregation. Involved in a variety of CNS functions, such as sedation, NREM sleep and PGE2-induced allodynia, and may have an anti-apoptotic role in oligodendrocytes. Binds small non-substrate lipophilic molecules, including biliverdin, bilirubin, retinal, retinoic acid and thyroid hormone, and may act as a scavenger for harmful hydrophobic molecules and as a secretory retinoid and thyroid hormone transporter. Possibly involved in development and maintenance of the blood-brain, blood-retina, blood-aqueous humor and blood-testis barrier. It is likely to play important roles in both maturation and maintenance of the central nervous system and male reproductive system. Involved in PLA2G3-dependent maturation of mast cells. PLA2G3 is secreted by immature mast cells and acts on nearby fibroblasts upstream to PTDGS to synthesize PGD2, which in turn promotes mast cell maturation and degranulation via PTGDR. The chain is Prostaglandin-H2 D-isomerase (PTGDS) from Ovis aries (Sheep).